The sequence spans 95 residues: MNIRPLQDRVLVRRAEEETKSAGGIILTGSAQEKPSQGEVVAVGNGKKLDNGSTQPMDVKVGDKVLFGKYSGSEVKVNDETLLMMREDDIMGIIG.

It belongs to the GroES chaperonin family. As to quaternary structure, heptamer of 7 subunits arranged in a ring. Interacts with the chaperonin GroEL.

It localises to the cytoplasm. In terms of biological role, together with the chaperonin GroEL, plays an essential role in assisting protein folding. The GroEL-GroES system forms a nano-cage that allows encapsulation of the non-native substrate proteins and provides a physical environment optimized to promote and accelerate protein folding. GroES binds to the apical surface of the GroEL ring, thereby capping the opening of the GroEL channel. This is Co-chaperonin GroES from Francisella philomiragia subsp. philomiragia (strain ATCC 25017 / CCUG 19701 / FSC 153 / O#319-036).